Consider the following 335-residue polypeptide: Fructose-1,6-bisphosphatase class 1 (335 aa).

Mg(2+)-binding residues include glutamate 92, aspartate 114, leucine 116, and aspartate 117. Substrate contacts are provided by residues 117–120 (DGSS), asparagine 209, and lysine 275. Residue glutamate 281 participates in Mg(2+) binding.

It belongs to the FBPase class 1 family. Homotetramer. The cofactor is Mg(2+).

It localises to the cytoplasm. It carries out the reaction beta-D-fructose 1,6-bisphosphate + H2O = beta-D-fructose 6-phosphate + phosphate. It participates in carbohydrate biosynthesis; gluconeogenesis. The sequence is that of Fructose-1,6-bisphosphatase class 1 from Polaromonas sp. (strain JS666 / ATCC BAA-500).